We begin with the raw amino-acid sequence, 136 residues long: Acyl-CoA thioesterase YbgC (136 aa).

Asp18 is a catalytic residue.

It belongs to the 4-hydroxybenzoyl-CoA thioesterase family.

In terms of biological role, displays acyl-CoA thioesterase activity with short chain aliphatic acyl-CoA thioesters, such as propionyl-CoA and butyryl-CoA. Enzyme activity is relatively low, suggesting that the acyl-CoA thioesters used in the assays are not the physiological substrates. Has no detectable activity with 4-hydroxybenzoyl-CoA, lauroyl-CoA (C12:0), arachidoyl-CoA (C20:0) and arachidonoyl-CoA (C20:4). The chain is Acyl-CoA thioesterase YbgC (ybgC) from Haemophilus influenzae (strain ATCC 51907 / DSM 11121 / KW20 / Rd).